A 2496-amino-acid polypeptide reads, in one-letter code: Non-reducing polyketide synthase adrD (2496 aa).

Residues 15–254 form an N-terminal acylcarrier protein transacylase domain (SAT) region; that stretch reads LVFGPQIAEI…HHASHITAVQ (240 aa). Residues 387-808 enclose the Ketosynthase family 3 (KS3) domain; that stretch reads ATPIAITGMG…GSNAALVVKQ (422 aa). Active-site for beta-ketoacyl synthase activity residues include cysteine 552, histidine 687, and histidine 726. Positions 914–1223 are malonyl-CoA:ACP transacylase (MAT) domain; that stretch reads LCFGGQNGNE…QSLDLGGPQG (310 aa). The active-site For acyl/malonyl transferase activity is serine 1001. The tract at residues 1295–1423 is N-terminal hotdog fold; it reads KEFVQLLTKQ…GEISLHPFGQ (129 aa). Positions 1295–1602 constitute a PKS/mFAS DH domain; that stretch reads KEFVQLLTKQ…FTSVSIAGLA (308 aa). The segment at 1296–1601 is product template (PT) domain; that stretch reads EFVQLLTKQP…EFTSVSIAGL (306 aa). Catalysis depends on histidine 1326, which acts as the Proton acceptor; for dehydratase activity. The segment at 1451-1602 is C-terminal hotdog fold; it reads ESSGLKGFAV…FTSVSIAGLA (152 aa). Catalysis depends on aspartate 1509, which acts as the Proton donor; for dehydratase activity. Basic and acidic residues predominate over residues 1615 to 1629; the sequence is EKASPDLSLRNDSKV. Positions 1615 to 1645 are disordered; that stretch reads EKASPDLSLRNDSKVDVNPTPQNTAPVVQPT. The segment covering 1633–1645 has biased composition (polar residues); the sequence is PTPQNTAPVVQPT. One can recognise a Carrier domain in the interval 1652–1726; it reads PGYFVVVQEM…ALVQTIFPDA (75 aa). Serine 1686 carries the post-translational modification O-(pantetheine 4'-phosphoryl)serine. Residues 1888–2121 are methyltransferase (CMeT) domain; sequence QHRSEHHLLK…GFQWVDWTHN (234 aa). The tract at residues 2151–2496 is thioesterase (TE) domain; that stretch reads RVMNEETVPY…YEFLRDHVRY (346 aa). Active-site for thioesterase activity residues include serine 2274 and aspartate 2433.

It carries out the reaction 3 malonyl-CoA + acetyl-CoA + 2 S-adenosyl-L-methionine = 3,5-dimethylorsellinate + 2 S-adenosyl-L-homocysteine + 3 CO2 + 4 CoA. It participates in secondary metabolite biosynthesis; terpenoid biosynthesis. Functionally, non-reducing polyketide synthase; part of the gene cluster that mediates the biosynthesis of andrastins, meroterpenoid compounds that exhibit inhibitory activity against ras farnesyltransferase, suggesting that they could be promising leads for antitumor agents. The first step of the pathway is the synthesis of 3,5-dimethylorsellinic acid (DMOA) by the polyketide synthase adrD via condensation of one acetyl-CoA starter unit with 3 malonyl-CoA units and 2 methylations. DMAO is then converted to farnesyl-DMAO by the prenyltransferase adrG. The methyltransferase adrK catalyzes the methylation of the carboxyl group of farnesyl-DMAO to farnesyl-DMAO methyl ester which is further converted to epoxyfarnesyl-DMAO methyl ester by the FAD-dependent monooxygenase adrH. The terpene cyclase adrI then catalyzes the carbon skeletal rearrangement to generate the andrastin E, the first compound in the pathway having the andrastin scaffold, with the tetracyclic ring system. The post-cyclization tailoring enzymes adrF, adrE, adrJ, and adrA, are involved in the conversion of andrastin E into andrastin A. The short chain dehydrogenase adrF is responsible for the oxidation of the C-3 a hydroxyl group of andrastin E to yield the corresponding ketone, andrastin D. The ketoreductase adrE stereoselectively reduces the carbonyl moiety to reverse the stereochemistry of the C-3 position to yield andrastin F. The acetyltransferase adrJ is the acetyltransferase that attaches the acetyl group to the C-3 hydroxyl group of andrastin F to yield andrastin C. Finally, the cytochrome P450 monooxygenase adrA catalyzes two sequential oxidation reactions of the C-23 methyl group, to generate the corresponding alcohol andrastin B, and aldehyde andrastin A. The sequence is that of Non-reducing polyketide synthase adrD from Penicillium rubens (strain ATCC 28089 / DSM 1075 / NRRL 1951 / Wisconsin 54-1255) (Penicillium chrysogenum).